The primary structure comprises 358 residues: Type II restriction enzyme CviJI (358 aa).

Requires Mg(2+) as cofactor.

It carries out the reaction Endonucleolytic cleavage of DNA to give specific double-stranded fragments with terminal 5'-phosphates.. In terms of biological role, a P subtype restriction enzyme that recognizes the double-stranded sequence 5'-RGCY-3' and cleaves after G-2. In the presence of ATP, there is a relaxation of its specificity and it can cleave 5'-RGCN-3' and 5'-YGCY-3', but not 5'-YGCR-3' (R.CviJI* activity). This Paramecium bursaria Chlorella virus IL3A (PBCV-IL3A) protein is Type II restriction enzyme CviJI.